The sequence spans 361 residues: Probable mannose-1-phosphate guanylyltransferase 3 (361 aa).

GDP-alpha-D-mannose is bound by residues Leu6 and Val7. 5 residues coordinate diphosphate: Gly9, Gly11, Thr12, Arg13, and Lys23. Positions 85, 109, 111, 146, and 173 each coordinate GDP-alpha-D-mannose.

Belongs to the transferase hexapeptide repeat family.

The catalysed reaction is alpha-D-mannose 1-phosphate + GTP + H(+) = GDP-alpha-D-mannose + diphosphate. The protein operates within nucleotide-sugar biosynthesis; GDP-alpha-D-mannose biosynthesis; GDP-alpha-D-mannose from alpha-D-mannose 1-phosphate (GTP route): step 1/1. Functionally, catalyzes a reaction of the Smirnoff-Wheeler pathway, the major route to ascorbate biosynthesis in plants. The sequence is that of Probable mannose-1-phosphate guanylyltransferase 3 from Oryza sativa subsp. japonica (Rice).